A 467-amino-acid chain; its full sequence is ATP synthase subunit beta (467 aa).

Gly156–Thr163 contacts ATP.

It belongs to the ATPase alpha/beta chains family. In terms of assembly, F-type ATPases have 2 components, CF(1) - the catalytic core - and CF(0) - the membrane proton channel. CF(1) has five subunits: alpha(3), beta(3), gamma(1), delta(1), epsilon(1). CF(0) has three main subunits: a(1), b(2) and c(9-12). The alpha and beta chains form an alternating ring which encloses part of the gamma chain. CF(1) is attached to CF(0) by a central stalk formed by the gamma and epsilon chains, while a peripheral stalk is formed by the delta and b chains.

The protein resides in the cell membrane. The catalysed reaction is ATP + H2O + 4 H(+)(in) = ADP + phosphate + 5 H(+)(out). In terms of biological role, produces ATP from ADP in the presence of a proton gradient across the membrane. The catalytic sites are hosted primarily by the beta subunits. In Cytobacillus firmus (Bacillus firmus), this protein is ATP synthase subunit beta.